Consider the following 366-residue polypeptide: NADH-quinone oxidoreductase subunit D (366 aa).

This sequence belongs to the complex I 49 kDa subunit family. As to quaternary structure, NDH-1 is composed of 14 different subunits. Subunits NuoB, C, D, E, F, and G constitute the peripheral sector of the complex.

It is found in the cell membrane. It catalyses the reaction a quinone + NADH + 5 H(+)(in) = a quinol + NAD(+) + 4 H(+)(out). Its function is as follows. NDH-1 shuttles electrons from NADH, via FMN and iron-sulfur (Fe-S) centers, to quinones in the respiratory chain. The immediate electron acceptor for the enzyme in this species is believed to be a menaquinone. Couples the redox reaction to proton translocation (for every two electrons transferred, four hydrogen ions are translocated across the cytoplasmic membrane), and thus conserves the redox energy in a proton gradient. This Bacillus mycoides (strain KBAB4) (Bacillus weihenstephanensis) protein is NADH-quinone oxidoreductase subunit D.